A 233-amino-acid polypeptide reads, in one-letter code: Defense protein 3 (233 aa).

An N-terminal signal peptide occupies residues 1-17; the sequence is MFGKFVLLAVLLVGVNS. The propeptide occupies 18-45; the sequence is RYVIIEDPVYYIEDHELPEQWTSSRVRR.

It belongs to the attacin/sarcotoxin-2 family.

It is found in the secreted. Functionally, has antibacterial activity against both Gram-positive and Gram-negative bacteria. This is Defense protein 3 from Lonomia obliqua (Moth).